A 581-amino-acid polypeptide reads, in one-letter code: Frizzled-10 (581 aa).

The first 20 residues, Met-1 to Ala-20, serve as a signal peptide directing secretion. The Extracellular portion of the chain corresponds to Ile-21 to Arg-225. One can recognise an FZ domain in the interval Pro-29 to Ala-150. 5 disulfide bridges follow: Cys-34/Cys-95, Cys-42/Cys-88, Cys-79/Cys-117, Cys-106/Cys-147, and Cys-110/Cys-134. N-linked (GlcNAc...) asparagine glycosylation is present at Asn-48. Residue Asn-153 is glycosylated (N-linked (GlcNAc...) asparagine). The helical transmembrane segment at Phe-226–Val-246 threads the bilayer. The Cytoplasmic portion of the chain corresponds to Leu-247–Pro-262. A helical membrane pass occupies residues Ile-263–Ala-283. Residues Gly-284–Leu-311 lie on the Extracellular side of the membrane. Residues Val-312 to Leu-332 form a helical membrane-spanning segment. Residues Thr-333–Ser-351 are Cytoplasmic-facing. Residues Ser-352–Met-372 form a helical membrane-spanning segment. The Extracellular segment spans residues Arg-373–Ala-393. Residues Leu-394–Leu-414 form a helical membrane-spanning segment. Topologically, residues Ser-415 to Arg-443 are cytoplasmic. The helical transmembrane segment at Ile-444 to Tyr-464 threads the bilayer. Residues Glu-465 to Glu-502 lie on the Extracellular side of the membrane. N-linked (GlcNAc...) asparagine glycosylation occurs at Asn-485. A helical membrane pass occupies residues Ile-503 to Trp-523. Over Thr-524–Val-581 the chain is Cytoplasmic. Residues Lys-526 to Trp-531 carry the Lys-Thr-X-X-X-Trp motif, mediates interaction with the PDZ domain of Dvl family members motif. A disordered region spans residues Ala-560 to Val-581. Positions Thr-579–Val-581 match the PDZ-binding motif.

It belongs to the G-protein coupled receptor Fz/Smo family. As to quaternary structure, interacts with WNT7B. Interacts with MYOC. Post-translationally, ubiquitinated by ZNRF3, leading to its degradation by the proteasome. As to expression, highest levels in the placenta and fetal kidney, followed by fetal lung and brain. In adult brain, abundantly expressed in the cerebellum, followed by cerebral cortex, medulla and spinal cord; very low levels in total brain, frontal lobe, temporal lobe and putamen. Weak expression detected in adult brain, heart, lung, skeletal muscle, pancreas, spleen and prostate.

The protein resides in the cell membrane. Its function is as follows. Receptor for Wnt proteins. Functions in the canonical Wnt/beta-catenin signaling pathway. The canonical Wnt/beta-catenin signaling pathway leads to the activation of disheveled proteins, inhibition of GSK-3 kinase, nuclear accumulation of beta-catenin and activation of Wnt target genes. A second signaling pathway involving PKC and calcium fluxes has been seen for some family members, but it is not yet clear if it represents a distinct pathway or if it can be integrated in the canonical pathway, as PKC seems to be required for Wnt-mediated inactivation of GSK-3 kinase. Both pathways seem to involve interactions with G-proteins. May be involved in transduction and intercellular transmission of polarity information during tissue morphogenesis and/or in differentiated tissues. In Homo sapiens (Human), this protein is Frizzled-10 (FZD10).